Here is a 126-residue protein sequence, read N- to C-terminus: Small ribosomal subunit protein uS12 (126 aa).

A disordered region spans residues 1–28; the sequence is MPTINQLVRKGRQSETTKSKSPALQDCP. A 3-methylthioaspartic acid modification is found at D89. Residues 103–126 form a disordered region; sequence DTQGVKDRKQARSKYGAKRAKAGK. Residues 113–126 show a composition bias toward basic residues; it reads ARSKYGAKRAKAGK.

This sequence belongs to the universal ribosomal protein uS12 family. As to quaternary structure, part of the 30S ribosomal subunit. Contacts proteins S8 and S17. May interact with IF1 in the 30S initiation complex.

In terms of biological role, with S4 and S5 plays an important role in translational accuracy. Functionally, interacts with and stabilizes bases of the 16S rRNA that are involved in tRNA selection in the A site and with the mRNA backbone. Located at the interface of the 30S and 50S subunits, it traverses the body of the 30S subunit contacting proteins on the other side and probably holding the rRNA structure together. The combined cluster of proteins S8, S12 and S17 appears to hold together the shoulder and platform of the 30S subunit. In Paraburkholderia phytofirmans (strain DSM 17436 / LMG 22146 / PsJN) (Burkholderia phytofirmans), this protein is Small ribosomal subunit protein uS12.